The sequence spans 335 residues: Phospho-N-acetylmuramoyl-pentapeptide-transferase (335 aa).

A run of 9 helical transmembrane segments spans residues 2-22 (PPLFCVLKAFFIGLVVSLILV), 55-75 (IPTAGGIIFVLSVVLSILLLL), 77-97 (CNLWSTWFLVGATLLWGALGW), 118-137 (FFIQNCLAIGTVLPIMIAYG), 153-173 (LPHCWLGYLFSFSIAVLAIVG), 193-213 (VIACLGMLIVTFAYGAPWAFI), 238-258 (IFMGDTGSLFLGGMLGICAVL), 263-283 (FMLLFMGGIFVLESLSVILQV), and 313-333 (VVRNFWIIEFLCVAIGIFAVF).

Belongs to the glycosyltransferase 4 family. MraY subfamily. Mg(2+) is required as a cofactor.

It is found in the cell inner membrane. It catalyses the reaction UDP-N-acetyl-alpha-D-muramoyl-L-alanyl-gamma-D-glutamyl-meso-2,6-diaminopimeloyl-D-alanyl-D-alanine + di-trans,octa-cis-undecaprenyl phosphate = di-trans,octa-cis-undecaprenyl diphospho-N-acetyl-alpha-D-muramoyl-L-alanyl-D-glutamyl-meso-2,6-diaminopimeloyl-D-alanyl-D-alanine + UMP. The protein operates within cell wall biogenesis; peptidoglycan biosynthesis. Its function is as follows. Catalyzes the initial step of the lipid cycle reactions in the biosynthesis of the cell wall peptidoglycan: transfers peptidoglycan precursor phospho-MurNAc-pentapeptide from UDP-MurNAc-pentapeptide onto the lipid carrier undecaprenyl phosphate, yielding undecaprenyl-pyrophosphoryl-MurNAc-pentapeptide, known as lipid I. This is Phospho-N-acetylmuramoyl-pentapeptide-transferase from Chlamydia muridarum (strain MoPn / Nigg).